Consider the following 114-residue polypeptide: Flagellar transcriptional regulator FlhD (114 aa).

This sequence belongs to the FlhD family. In terms of assembly, homodimer; disulfide-linked. Forms a heterohexamer composed of two FlhC and four FlhD subunits. Each FlhC binds a FlhD dimer, forming a heterotrimer, and a hexamer assembles by dimerization of two heterotrimers.

Its subcellular location is the cytoplasm. Functions in complex with FlhC as a master transcriptional regulator that regulates transcription of several flagellar and non-flagellar operons by binding to their promoter region. Activates expression of class 2 flagellar genes, including fliA, which is a flagellum-specific sigma factor that turns on the class 3 genes. Also regulates genes whose products function in a variety of physiological pathways. This chain is Flagellar transcriptional regulator FlhD, found in Wigglesworthia glossinidia brevipalpis.